The primary structure comprises 46 residues: Short transmembrane mitochondrial protein 1 (46 aa).

A helical transmembrane segment spans residues 7–23; sequence GFTLGNVVGMYLAQNYE.

Belongs to the STMP1 family. In terms of tissue distribution, widely expressed. Expressed more abundantly in brain compared with other tissues such as heart, muscle and liver.

It localises to the mitochondrion inner membrane. The protein localises to the mitochondrion outer membrane. It is found in the mitochondrion intermembrane space. Functionally, microprotein involved in mitochondrial respiratory chain complex III (ubiquinol-cytochrome c oxidoreductase) and complex IV (mitochondrial cytochrome c oxidase complex) assembly. Required for the formation of mitochondrial supercomplexes (SCs). Also required for the activation of the NLRP3 inflammasome. The polypeptide is Short transmembrane mitochondrial protein 1 (Danio rerio (Zebrafish)).